Consider the following 126-residue polypeptide: Small ribosomal subunit protein uS12 (126 aa).

The interval M1–P28 is disordered. Residue D89 is modified to 3-methylthioaspartic acid. The disordered stretch occupies residues A104 to K126. The span at G113 to K126 shows a compositional bias: basic residues.

Belongs to the universal ribosomal protein uS12 family. Part of the 30S ribosomal subunit. Contacts proteins S8 and S17. May interact with IF1 in the 30S initiation complex.

Functionally, with S4 and S5 plays an important role in translational accuracy. In terms of biological role, interacts with and stabilizes bases of the 16S rRNA that are involved in tRNA selection in the A site and with the mRNA backbone. Located at the interface of the 30S and 50S subunits, it traverses the body of the 30S subunit contacting proteins on the other side and probably holding the rRNA structure together. The combined cluster of proteins S8, S12 and S17 appears to hold together the shoulder and platform of the 30S subunit. In Synechocystis sp. (strain ATCC 27184 / PCC 6803 / Kazusa), this protein is Small ribosomal subunit protein uS12.